Consider the following 319-residue polypeptide: Beta-ketoacyl-[acyl-carrier-protein] synthase III (319 aa).

Catalysis depends on residues Cys110 and His246. The segment at 247 to 251 (QANYR) is ACP-binding. The active site involves Asn276.

It belongs to the thiolase-like superfamily. FabH family. As to quaternary structure, homodimer.

Its subcellular location is the cytoplasm. The catalysed reaction is malonyl-[ACP] + acetyl-CoA + H(+) = 3-oxobutanoyl-[ACP] + CO2 + CoA. It functions in the pathway lipid metabolism; fatty acid biosynthesis. In terms of biological role, catalyzes the condensation reaction of fatty acid synthesis by the addition to an acyl acceptor of two carbons from malonyl-ACP. Catalyzes the first condensation reaction which initiates fatty acid synthesis and may therefore play a role in governing the total rate of fatty acid production. Possesses both acetoacetyl-ACP synthase and acetyl transacylase activities. Its substrate specificity determines the biosynthesis of branched-chain and/or straight-chain of fatty acids. This chain is Beta-ketoacyl-[acyl-carrier-protein] synthase III, found in Lactobacillus delbrueckii subsp. bulgaricus (strain ATCC 11842 / DSM 20081 / BCRC 10696 / JCM 1002 / NBRC 13953 / NCIMB 11778 / NCTC 12712 / WDCM 00102 / Lb 14).